Here is a 379-residue protein sequence, read N- to C-terminus: Histidinol-phosphate aminotransferase (379 aa).

Lys-236 is modified (N6-(pyridoxal phosphate)lysine).

This sequence belongs to the class-II pyridoxal-phosphate-dependent aminotransferase family. Histidinol-phosphate aminotransferase subfamily. In terms of assembly, homodimer. Pyridoxal 5'-phosphate is required as a cofactor.

It carries out the reaction L-histidinol phosphate + 2-oxoglutarate = 3-(imidazol-4-yl)-2-oxopropyl phosphate + L-glutamate. Its pathway is amino-acid biosynthesis; L-histidine biosynthesis; L-histidine from 5-phospho-alpha-D-ribose 1-diphosphate: step 7/9. This chain is Histidinol-phosphate aminotransferase, found in Desulfotalea psychrophila (strain LSv54 / DSM 12343).